Consider the following 229-residue polypeptide: Large ribosomal subunit protein uL1 (229 aa).

The protein belongs to the universal ribosomal protein uL1 family. As to quaternary structure, part of the 50S ribosomal subunit.

Its function is as follows. Binds directly to 23S rRNA. The L1 stalk is quite mobile in the ribosome, and is involved in E site tRNA release. In terms of biological role, protein L1 is also a translational repressor protein, it controls the translation of the L11 operon by binding to its mRNA. This Listeria innocua serovar 6a (strain ATCC BAA-680 / CLIP 11262) protein is Large ribosomal subunit protein uL1.